Reading from the N-terminus, the 37-residue chain is Cytochrome b6-f complex subunit 5 (37 aa).

A helical membrane pass occupies residues 5–25 (LLSGIVLGLIVVTLAGLFYAA).

This sequence belongs to the PetG family. In terms of assembly, the 4 large subunits of the cytochrome b6-f complex are cytochrome b6, subunit IV (17 kDa polypeptide, PetD), cytochrome f and the Rieske protein, while the 4 small subunits are PetG, PetL, PetM and PetN. The complex functions as a dimer.

The protein resides in the cellular thylakoid membrane. In terms of biological role, component of the cytochrome b6-f complex, which mediates electron transfer between photosystem II (PSII) and photosystem I (PSI), cyclic electron flow around PSI, and state transitions. PetG is required for either the stability or assembly of the cytochrome b6-f complex. The sequence is that of Cytochrome b6-f complex subunit 5 from Anabaena variabilis.